Consider the following 388-residue polypeptide: Na(+)/H(+) antiporter NhaA (388 aa).

The Cytoplasmic segment spans residues Met-1–Asp-11. Residues Ala-12–Ser-31 form a helical membrane-spanning segment. Topologically, residues Gly-32 to Asn-58 are periplasmic. The chain crosses the membrane as a helical span at residues Met-59 to Lys-80. The Cytoplasmic segment spans residues Arg-81–Phe-96. Residues Pro-97–Asn-116 traverse the membrane as a helical segment. At Tyr-117 to Thr-122 the chain is on the periplasmic side. Residues Arg-123–Ala-130 traverse the membrane as a helical segment. Residues Ala-131–Ile-154 lie on the Cytoplasmic side of the membrane. Residues Phe-155–Thr-176 form a helical membrane-spanning segment. Residues Asn-177 to Ser-180 lie on the Periplasmic side of the membrane. A helical membrane pass occupies residues Met-181–Cys-200. Topologically, residues Gly-201–Arg-204 are cytoplasmic. A helical transmembrane segment spans residues Thr-205–Ser-222. Residue Gly-223 is a topological domain, periplasmic. Residues Val-224 to Phe-236 form a helical membrane-spanning segment. Residues Ile-237 to His-253 are Cytoplasmic-facing. The helical transmembrane segment at Val-254–Ala-272 threads the bilayer. Residues Gly-273–Ser-286 are Periplasmic-facing. A helical transmembrane segment spans residues Ile-287–Leu-310. Residues Ala-311–Phe-339 lie on the Cytoplasmic side of the membrane. The helical transmembrane segment at Thr-340 to Phe-350 threads the bilayer. Topologically, residues Gly-351–Leu-357 are periplasmic. A helical transmembrane segment spans residues Ile-358–Leu-380. Topologically, residues Arg-381–Val-388 are cytoplasmic.

This sequence belongs to the NhaA Na(+)/H(+) (TC 2.A.33) antiporter family.

It is found in the cell inner membrane. The enzyme catalyses Na(+)(in) + 2 H(+)(out) = Na(+)(out) + 2 H(+)(in). Functionally, na(+)/H(+) antiporter that extrudes sodium in exchange for external protons. In Shigella flexneri, this protein is Na(+)/H(+) antiporter NhaA.